The chain runs to 83 residues: MGVKLNICLLLLLVAIISSQGFNLRKKEDSKDEKPFGNYRRGSPCSNYEGSCTPNHIPCPPGSHECRQLPGCYPGVERCCCQY.

The first 21 residues, 1–21, serve as a signal peptide directing secretion; the sequence is MGVKLNICLLLLLVAIISSQG. A propeptide spanning residues 22 to 39 is cleaved from the precursor; the sequence is FNLRKKEDSKDEKPFGNY. A compositionally biased stretch (basic and acidic residues) spans 25-35; sequence RKKEDSKDEKP. Residues 25–44 are disordered; it reads RKKEDSKDEKPFGNYRRGSP.

It belongs to the Cnidaria small cysteine-rich protein (SCRiP) family. alpha subfamily. Post-translationally, contains 4 disulfide bonds.

It localises to the secreted. The protein localises to the nematocyst. This recombinant protein induces severe neurotoxicity on zebrafish larvae (Danio rerio) at a concentration of 230 mg/ml, but does not show toxicity when injected in blowfly larvae (Sarcophaga falculata). All fish incubated with this protein died within 16 hours of exposure. Has also been claimed to be implied in calcification, but this function seems improbable. This chain is Small cysteine-rich protein 3, found in Acropora millepora (Staghorn coral).